The primary structure comprises 374 residues: Peptide chain release factor 2 (374 aa).

Q250 carries the post-translational modification N5-methylglutamine.

Belongs to the prokaryotic/mitochondrial release factor family. Methylated by PrmC. Methylation increases the termination efficiency of RF2.

Its subcellular location is the cytoplasm. Peptide chain release factor 2 directs the termination of translation in response to the peptide chain termination codons UGA and UAA. The protein is Peptide chain release factor 2 of Beutenbergia cavernae (strain ATCC BAA-8 / DSM 12333 / CCUG 43141 / JCM 11478 / NBRC 16432 / NCIMB 13614 / HKI 0122).